The sequence spans 549 residues: SET and MYND domain-containing protein DDB_G0277331 (549 aa).

The SET domain occupies 27-283; it reads KGIELRYCDG…KDEELFINYS (257 aa). Residues Cys71, Cys74, Cys90, Cys93, Cys99, Cys103, His111, and Cys115 each contribute to the Zn(2+) site. An MYND-type zinc finger spans residues 71–115; sequence CDECLKNKLDLEEGKTLKRCSNCKLVYYCSTDCQTKAWKIHKQEC. Positions 340–401 form a coiled coil; that stretch reads NINNNNNNNN…IIKNLQNKLS (62 aa).

It belongs to the class V-like SAM-binding methyltransferase superfamily.

Functionally, probable methyltransferase. This Dictyostelium discoideum (Social amoeba) protein is SET and MYND domain-containing protein DDB_G0277331.